Here is a 627-residue protein sequence, read N- to C-terminus: Pescadillo homolog (627 aa).

Residues 321–414 (RLRTLFKGLK…QLLPTNKYFI (94 aa)) enclose the BRCT domain. Disordered stretches follow at residues 436 to 471 (PEEK…AVDQ), 489 to 562 (YKKY…LQAR), and 596 to 627 (FEAG…KLGK). Phosphoserine is present on residues serine 453 and serine 457. Acidic residues-rich tracts occupy residues 453–471 (SDDD…AVDQ) and 498–521 (VNED…EELD). Residues 522-533 (EQAKRLKEEKQK) show a composition bias toward basic and acidic residues. Residues 540–549 (KVHKVNKRQL) show a composition bias toward basic residues. Basic and acidic residues-rich tracts occupy residues 550 to 559 (HKAEVDEHRL) and 596 to 605 (FEAGEKEARK). Residues 616–627 (AAAAAKASKLGK) show a composition bias toward low complexity.

It belongs to the pescadillo family.

It is found in the nucleus. The protein resides in the nucleolus. The protein localises to the nucleoplasm. Functionally, required for maturation of ribosomal RNAs and formation of the large ribosomal subunit. The chain is Pescadillo homolog from Drosophila ananassae (Fruit fly).